Reading from the N-terminus, the 418-residue chain is Serine hydroxymethyltransferase (418 aa).

Residues L121 and G125 to L127 each bind (6S)-5,6,7,8-tetrahydrofolate. Position 230 is an N6-(pyridoxal phosphate)lysine (K230). S356–F358 contributes to the (6S)-5,6,7,8-tetrahydrofolate binding site.

This sequence belongs to the SHMT family. In terms of assembly, homodimer. Requires pyridoxal 5'-phosphate as cofactor.

Its subcellular location is the cytoplasm. The catalysed reaction is (6R)-5,10-methylene-5,6,7,8-tetrahydrofolate + glycine + H2O = (6S)-5,6,7,8-tetrahydrofolate + L-serine. Its pathway is one-carbon metabolism; tetrahydrofolate interconversion. The protein operates within amino-acid biosynthesis; glycine biosynthesis; glycine from L-serine: step 1/1. In terms of biological role, catalyzes the reversible interconversion of serine and glycine with tetrahydrofolate (THF) serving as the one-carbon carrier. This reaction serves as the major source of one-carbon groups required for the biosynthesis of purines, thymidylate, methionine, and other important biomolecules. Also exhibits THF-independent aldolase activity toward beta-hydroxyamino acids, producing glycine and aldehydes, via a retro-aldol mechanism. The protein is Serine hydroxymethyltransferase of Alteromonas mediterranea (strain DSM 17117 / CIP 110805 / LMG 28347 / Deep ecotype).